Reading from the N-terminus, the 312-residue chain is Apulose-4-phosphate transketolase subunit B (312 aa).

This sequence belongs to the transketolase family. As to quaternary structure, probable heterodimer composed of AptA and AptB. Thiamine diphosphate is required as a cofactor.

It catalyses the reaction apulose 4-phosphate + D-glyceraldehyde 3-phosphate = D-xylulose 5-phosphate + dihydroxyacetone phosphate. The protein operates within carbohydrate metabolism. Involved in catabolism of D-apiose. Catalyzes the transfer of the glycolaldehyde group from apulose-4-phosphate to D-glyceraldehyde 3-phosphate, generating dihydroxyacetone phosphate and D-xylulose-5-phosphate. The sequence is that of Apulose-4-phosphate transketolase subunit B from Phocaeicola vulgatus (strain ATCC 8482 / DSM 1447 / JCM 5826 / CCUG 4940 / NBRC 14291 / NCTC 11154) (Bacteroides vulgatus).